Here is a 290-residue protein sequence, read N- to C-terminus: Putative phosphoenolpyruvate synthase regulatory protein (290 aa).

170 to 177 provides a ligand contact to ADP; the sequence is GVSRCGKT.

It belongs to the pyruvate, phosphate/water dikinase regulatory protein family. PSRP subfamily.

The catalysed reaction is [pyruvate, water dikinase] + ADP = [pyruvate, water dikinase]-phosphate + AMP + H(+). It carries out the reaction [pyruvate, water dikinase]-phosphate + phosphate + H(+) = [pyruvate, water dikinase] + diphosphate. Bifunctional serine/threonine kinase and phosphorylase involved in the regulation of the phosphoenolpyruvate synthase (PEPS) by catalyzing its phosphorylation/dephosphorylation. The chain is Putative phosphoenolpyruvate synthase regulatory protein (ydiA) from Enterobacter agglomerans (Erwinia herbicola).